Reading from the N-terminus, the 504-residue chain is Maturase K (504 aa).

The protein belongs to the intron maturase 2 family. MatK subfamily.

The protein localises to the plastid. The protein resides in the chloroplast. Usually encoded in the trnK tRNA gene intron. Probably assists in splicing its own and other chloroplast group II introns. The chain is Maturase K from Hamamelis mollis (Chinese witch hazel).